A 358-amino-acid chain; its full sequence is Probable arabinan endo-1,5-alpha-L-arabinosidase B (358 aa).

The N-terminal stretch at 1–16 (MVLVATLFSLFTVSLC) is a signal peptide. The Proton acceptor role is filled by aspartate 39. Residue asparagine 194 is glycosylated (N-linked (GlcNAc...) asparagine). A disordered region spans residues 202–227 (HLAKHPKTERVNSQDQNPDPLCRDSS). Glutamate 233 functions as the Proton donor in the catalytic mechanism.

It belongs to the glycosyl hydrolase 43 family.

It localises to the secreted. The enzyme catalyses Endohydrolysis of (1-&gt;5)-alpha-arabinofuranosidic linkages in (1-&gt;5)-arabinans.. It functions in the pathway glycan metabolism; L-arabinan degradation. In terms of biological role, endo-1,5-alpha-L-arabinanase involved in degradation of pectin. Its preferred substrate is linear 1,5-alpha-L-arabinan. The polypeptide is Probable arabinan endo-1,5-alpha-L-arabinosidase B (abnB) (Aspergillus flavus (strain ATCC 200026 / FGSC A1120 / IAM 13836 / NRRL 3357 / JCM 12722 / SRRC 167)).